Here is a 370-residue protein sequence, read N- to C-terminus: Anhydro-N-acetylmuramic acid kinase (370 aa).

An ATP-binding site is contributed by 13 to 20; sequence GTSLDGVD.

It belongs to the anhydro-N-acetylmuramic acid kinase family.

It carries out the reaction 1,6-anhydro-N-acetyl-beta-muramate + ATP + H2O = N-acetyl-D-muramate 6-phosphate + ADP + H(+). The protein operates within amino-sugar metabolism; 1,6-anhydro-N-acetylmuramate degradation. Its pathway is cell wall biogenesis; peptidoglycan recycling. Catalyzes the specific phosphorylation of 1,6-anhydro-N-acetylmuramic acid (anhMurNAc) with the simultaneous cleavage of the 1,6-anhydro ring, generating MurNAc-6-P. Is required for the utilization of anhMurNAc either imported from the medium or derived from its own cell wall murein, and thus plays a role in cell wall recycling. This chain is Anhydro-N-acetylmuramic acid kinase, found in Vibrio cholerae serotype O1 (strain ATCC 39315 / El Tor Inaba N16961).